The primary structure comprises 312 residues: Glyoxylate/hydroxypyruvate reductase A (312 aa).

The active site involves R227. Catalysis depends on H275, which acts as the Proton donor.

Belongs to the D-isomer specific 2-hydroxyacid dehydrogenase family. GhrA subfamily.

The protein localises to the cytoplasm. The enzyme catalyses glycolate + NADP(+) = glyoxylate + NADPH + H(+). It catalyses the reaction (R)-glycerate + NAD(+) = 3-hydroxypyruvate + NADH + H(+). It carries out the reaction (R)-glycerate + NADP(+) = 3-hydroxypyruvate + NADPH + H(+). Catalyzes the NADPH-dependent reduction of glyoxylate and hydroxypyruvate into glycolate and glycerate, respectively. This Escherichia coli (strain SMS-3-5 / SECEC) protein is Glyoxylate/hydroxypyruvate reductase A.